Consider the following 285-residue polypeptide: Glutamate racemase (285 aa).

Substrate is bound by residues Asp-28–Ser-29 and Tyr-60–Gly-61. Residue Cys-92 is the Proton donor/acceptor of the active site. Asn-93–Thr-94 lines the substrate pocket. Cys-204 (proton donor/acceptor) is an active-site residue. A substrate-binding site is contributed by Thr-205–His-206.

The protein belongs to the aspartate/glutamate racemases family.

It catalyses the reaction L-glutamate = D-glutamate. The protein operates within cell wall biogenesis; peptidoglycan biosynthesis. Provides the (R)-glutamate required for cell wall biosynthesis. The sequence is that of Glutamate racemase from Escherichia fergusonii (strain ATCC 35469 / DSM 13698 / CCUG 18766 / IAM 14443 / JCM 21226 / LMG 7866 / NBRC 102419 / NCTC 12128 / CDC 0568-73).